Consider the following 207-residue polypeptide: NADH-quinone oxidoreductase subunit C (207 aa).

This sequence belongs to the complex I 30 kDa subunit family. NDH-1 is composed of 14 different subunits. Subunits NuoB, C, D, E, F, and G constitute the peripheral sector of the complex.

It is found in the cell inner membrane. The catalysed reaction is a quinone + NADH + 5 H(+)(in) = a quinol + NAD(+) + 4 H(+)(out). Its function is as follows. NDH-1 shuttles electrons from NADH, via FMN and iron-sulfur (Fe-S) centers, to quinones in the respiratory chain. The immediate electron acceptor for the enzyme in this species is believed to be ubiquinone. Couples the redox reaction to proton translocation (for every two electrons transferred, four hydrogen ions are translocated across the cytoplasmic membrane), and thus conserves the redox energy in a proton gradient. The chain is NADH-quinone oxidoreductase subunit C from Thermus thermophilus (strain ATCC BAA-163 / DSM 7039 / HB27).